Here is a 502-residue protein sequence, read N- to C-terminus: ATP synthase subunit alpha (502 aa).

The segment at 115 to 135 (VDGLGPINTTNTRPIESPAPG) is disordered. ATP is bound at residue 169–176 (GDRQTGKT).

It belongs to the ATPase alpha/beta chains family. In terms of assembly, F-type ATPases have 2 components, CF(1) - the catalytic core - and CF(0) - the membrane proton channel. CF(1) has five subunits: alpha(3), beta(3), gamma(1), delta(1), epsilon(1). CF(0) has three main subunits: a(1), b(2) and c(9-12). The alpha and beta chains form an alternating ring which encloses part of the gamma chain. CF(1) is attached to CF(0) by a central stalk formed by the gamma and epsilon chains, while a peripheral stalk is formed by the delta and b chains.

The protein resides in the cell membrane. It carries out the reaction ATP + H2O + 4 H(+)(in) = ADP + phosphate + 5 H(+)(out). Functionally, produces ATP from ADP in the presence of a proton gradient across the membrane. The alpha chain is a regulatory subunit. This Bacillus anthracis (strain A0248) protein is ATP synthase subunit alpha.